The sequence spans 301 residues: Homoserine O-acetyltransferase (301 aa).

C142 serves as the catalytic Acyl-thioester intermediate. K163 and S192 together coordinate substrate. H235 acts as the Proton acceptor in catalysis. The active site involves E237. Residue R249 coordinates substrate.

It belongs to the MetA family.

The protein resides in the cytoplasm. It catalyses the reaction L-homoserine + acetyl-CoA = O-acetyl-L-homoserine + CoA. Its pathway is amino-acid biosynthesis; L-methionine biosynthesis via de novo pathway; O-acetyl-L-homoserine from L-homoserine: step 1/1. Transfers an acetyl group from acetyl-CoA to L-homoserine, forming acetyl-L-homoserine. The sequence is that of Homoserine O-acetyltransferase from Bacillus cereus (strain B4264).